A 637-amino-acid chain; its full sequence is Biosynthetic arginine decarboxylase (637 aa).

Lys101 carries the post-translational modification N6-(pyridoxal phosphate)lysine. Residue 286 to 296 (FDVGGGLAVDY) participates in substrate binding.

Belongs to the Orn/Lys/Arg decarboxylase class-II family. SpeA subfamily. Requires Mg(2+) as cofactor. Pyridoxal 5'-phosphate serves as cofactor.

The enzyme catalyses L-arginine + H(+) = agmatine + CO2. Its pathway is amine and polyamine biosynthesis; agmatine biosynthesis; agmatine from L-arginine: step 1/1. Functionally, catalyzes the biosynthesis of agmatine from arginine. The chain is Biosynthetic arginine decarboxylase from Shewanella sp. (strain MR-7).